Reading from the N-terminus, the 351-residue chain is N6-Methyl-AMP deaminase (351 aa).

Zn(2+)-binding residues include H23 and H25. N(6)-methyl-AMP-binding positions include H25, N27, H73, S105–R108, D147, and G180. H207 provides a ligand contact to Zn(2+). N(6)-methyl-AMP is bound by residues E210, D292, and D293. The active-site Proton donor is the E210. D292 provides a ligand contact to Zn(2+).

The protein belongs to the metallo-dependent hydrolases superfamily. Adenosine and AMP deaminases family. As to quaternary structure, monomer. Zn(2+) is required as a cofactor.

It carries out the reaction N(6)-methyl-AMP + H2O + H(+) = IMP + methylamine. Functionally, catalyzes the hydrolysis of the free cytosolic methylated adenosine nucleotide N(6)-methyl-AMP (N6-mAMP) to produce inositol monophosphate (IMP) and methylamine. Is required for the catabolism of cytosolic N6-mAMP, which is derived from the degradation of mRNA containing N6-methylated adenine (m6A). This is N6-Methyl-AMP deaminase from Bos taurus (Bovine).